A 432-amino-acid polypeptide reads, in one-letter code: Histidine--tRNA ligase (432 aa).

It belongs to the class-II aminoacyl-tRNA synthetase family. Homodimer.

The protein resides in the cytoplasm. It catalyses the reaction tRNA(His) + L-histidine + ATP = L-histidyl-tRNA(His) + AMP + diphosphate + H(+). The chain is Histidine--tRNA ligase from Symbiobacterium thermophilum (strain DSM 24528 / JCM 14929 / IAM 14863 / T).